Here is a 593-residue protein sequence, read N- to C-terminus: A-type ATP synthase subunit A (593 aa).

236–243 (GPFGSGKT) contributes to the ATP binding site.

The protein belongs to the ATPase alpha/beta chains family. In terms of assembly, has multiple subunits with at least A(3), B(3), C, D, E, F, H, I and proteolipid K(x).

It is found in the cell membrane. The catalysed reaction is ATP + H2O + 4 H(+)(in) = ADP + phosphate + 5 H(+)(out). Produces ATP from ADP in the presence of a proton gradient across the membrane. The archaeal alpha chain is a catalytic subunit. Functionally, component of the A-type ATP synthase that produces ATP from ADP in the presence of a proton gradient across the membrane. The A chain is the catalytic subunit. This is A-type ATP synthase subunit A from Pyrobaculum aerophilum (strain ATCC 51768 / DSM 7523 / JCM 9630 / CIP 104966 / NBRC 100827 / IM2).